The sequence spans 615 residues: Elongation factor 4 (615 aa).

The tr-type G domain occupies 14–200 (SKIRNFCIIA…KVAELIPAPT (187 aa)). GTP contacts are provided by residues 26–31 (DHGKST) and 147–150 (NKID).

It belongs to the TRAFAC class translation factor GTPase superfamily. Classic translation factor GTPase family. LepA subfamily.

Its subcellular location is the cell membrane. It catalyses the reaction GTP + H2O = GDP + phosphate + H(+). In terms of biological role, required for accurate and efficient protein synthesis under certain stress conditions. May act as a fidelity factor of the translation reaction, by catalyzing a one-codon backward translocation of tRNAs on improperly translocated ribosomes. Back-translocation proceeds from a post-translocation (POST) complex to a pre-translocation (PRE) complex, thus giving elongation factor G a second chance to translocate the tRNAs correctly. Binds to ribosomes in a GTP-dependent manner. The protein is Elongation factor 4 of Corynebacterium aurimucosum (strain ATCC 700975 / DSM 44827 / CIP 107346 / CN-1) (Corynebacterium nigricans).